Reading from the N-terminus, the 505-residue chain is Geissoschizine oxidase (505 aa).

A helical membrane pass occupies residues 9–29 (FSSPAFFLLLPFLFLLIKPLI). Residue Cys443 participates in heme binding.

It belongs to the cytochrome P450 family. Heme is required as a cofactor. As to expression, mainly expressed in roots.

The protein resides in the membrane. The catalysed reaction is (19E)-geissoschizine + reduced [NADPH--hemoprotein reductase] + O2 = akuammicine + formate + oxidized [NADPH--hemoprotein reductase] + H2O + H(+). The enzyme catalyses (19E)-geissoschizine + reduced [NADPH--hemoprotein reductase] + O2 = 3,17-didehydrostemmadenine + oxidized [NADPH--hemoprotein reductase] + 2 H2O. It carries out the reaction 3,17-didehydrostemmadenine = 17-dehydropreakuammicine. It functions in the pathway alkaloid biosynthesis. Monooxygenase involved in the biosynthesis of curare monoterpene indole alkaloids (MIAs), natural products such as strychnine, a neurotoxic compound used as a pesticide to control rodents, and its pharmacologically active derivatives, including brucine, used to regulate blood pressure. Curare alkaloids act as animal glycine receptor antagonists. Catalyzes the conversion of geissoschizine to dehydropreakuammicine by cyclization, which is spontaneously converted into akuammicine by aromatization. The sequence is that of Geissoschizine oxidase from Strychnos nux-vomica (Poison nut).